The following is a 656-amino-acid chain: Protein sly1 homolog (656 aa).

Repeat copies occupy residues 85-121 (DENL…NLAA), 203-245 (RNSA…FSFQ), 419-456 (LELL…ERLR), and 460-496 (QSAG…GGGT). Positions 85–496 (DENLDRIQQD…QATQYEGGGT (412 aa)) are 4 X approximate repeats.

This sequence belongs to the STXBP/unc-18/SEC1 family.

The protein localises to the cytoplasm. The protein resides in the membrane. In terms of biological role, non-vital for development. This chain is Protein sly1 homolog (Slh), found in Drosophila virilis (Fruit fly).